An 807-amino-acid chain; its full sequence is Mechanosensitive cation channel TMEM63A (807 aa).

Over 1–51 (MTDSPFLELWQSRAVSVREQLGLGDRPNDSYCYNSAKNSTVLQGVTFGGIP) the chain is Extracellular. Asn-38 carries an N-linked (GlcNAc...) asparagine glycan. The chain crosses the membrane as a helical span at residues 52–74 (TVLLIDVSCFLFLILVFSIIRRR). The Cytoplasmic segment spans residues 75-134 (FWDYGRIALVSEADSEPRFQRLSSTSSSGQQDFENELGCCPWLTAIFRLHDDQILEWCGE). The chain crosses the membrane as a helical span at residues 135–167 (DAIHYLSFQRHIIFLLVVVSFLSLCVILPVNLS). The Extracellular segment spans residues 168–191 (GDLLDKDPYSFGRTTIANLQTDND). The chain crosses the membrane as a helical span at residues 192-217 (LLWLHTIFAVIYLFLTVGFMRHHTQS). Residues 218 to 416 (IKYKEENLVR…CWKNLSIQGL (199 aa)) are Cytoplasmic-facing. Positions 219 to 414 (KYKEENLVRR…DICWKNLSIQ (196 aa)) are intracellular linker IL2; confers mechanosensitivity. The helical transmembrane segment at 417–444 (RWWLQWLGINFTLFLGLFFLTTPSIILS) threads the bilayer. Topologically, residues 445 to 462 (TMDKFNVTKPIHALNNPI) are extracellular. Asn-450 is a glycosylation site (N-linked (GlcNAc...) asparagine). The chain crosses the membrane as a helical span at residues 463–490 (ISQFFPTLLLWSFSALLPSIVYYSTLLE). Residues 491–495 (SHWTK) are Cytoplasmic-facing. The chain crosses the membrane as a helical span at residues 496–532 (SGENQIMMTKVYIFLIFMVLILPSLGLTSLDFFFRWL). The Extracellular portion of the chain corresponds to 533–554 (FDKTSSEASIRLECVFLPDQGA). The helical transmembrane segment at 555 to 586 (FFVNYVIASAFIGNGMELLRLPGLILYTFRMI) threads the bilayer. A gating helix region spans residues 555-586 (FFVNYVIASAFIGNGMELLRLPGLILYTFRMI). The Cytoplasmic portion of the chain corresponds to 587–606 (MAKTAADRRNVKQNQAFQYE). The helical transmembrane segment at 607–624 (FGAMYAWMLCVFTVIMAY) threads the bilayer. Residues 625 to 628 (SITC) lie on the Extracellular side of the membrane. Residues 629-651 (PIIAPFGLIYILLKHMVDRHNLY) traverse the membrane as a helical segment. At 652-661 (FIYLPAKLEK) the chain is on the cytoplasmic side. Residues 662 to 689 (GIHFAAVNQALAAPILCLFWLYFFSFLR) traverse the membrane as a helical segment. At 690-694 (LGMKA) the chain is on the extracellular side. A helical transmembrane segment spans residues 695-709 (PATLFTFLVVLLTIL). Residues 710 to 807 (VCLAHTCFGY…GSVAAAPQEA (98 aa)) are Cytoplasmic-facing. A Phosphoserine modification is found at Ser-739.

This sequence belongs to the CSC1 (TC 1.A.17) family. Monomer. N-Glycosylated.

The protein resides in the lysosome membrane. The protein localises to the early endosome membrane. Its subcellular location is the cell membrane. The enzyme catalyses Ca(2+)(in) = Ca(2+)(out). Mechanosensitive cation channel with low conductance and high activation threshold. In contrast to TMEM63B, does not show phospholipid scramblase activity. Acts as a regulator of lysosomal morphology by mediating lysosomal mechanosensitivity. Important for the baby's first breath and respiration throughout life. Upon lung inflation conducts cation currents in alveolar type 1 and 2 cells triggering lamellar body exocytosis and surfactant secretion into airspace. Also acts as an osmosensitive cation channel preferentially activated by hypotonic stress. This chain is Mechanosensitive cation channel TMEM63A (TMEM63A), found in Pongo abelii (Sumatran orangutan).